The chain runs to 217 residues: Imidazole glycerol phosphate synthase subunit HisH (217 aa).

The 209-residue stretch at 6 to 214 (QIAVVDYDMG…VTQVAAAQLQ (209 aa)) folds into the Glutamine amidotransferase type-1 domain. The active-site Nucleophile is C84. Active-site residues include H189 and E191.

In terms of assembly, heterodimer of HisH and HisF.

It is found in the cytoplasm. It carries out the reaction 5-[(5-phospho-1-deoxy-D-ribulos-1-ylimino)methylamino]-1-(5-phospho-beta-D-ribosyl)imidazole-4-carboxamide + L-glutamine = D-erythro-1-(imidazol-4-yl)glycerol 3-phosphate + 5-amino-1-(5-phospho-beta-D-ribosyl)imidazole-4-carboxamide + L-glutamate + H(+). The catalysed reaction is L-glutamine + H2O = L-glutamate + NH4(+). The protein operates within amino-acid biosynthesis; L-histidine biosynthesis; L-histidine from 5-phospho-alpha-D-ribose 1-diphosphate: step 5/9. Its function is as follows. IGPS catalyzes the conversion of PRFAR and glutamine to IGP, AICAR and glutamate. The HisH subunit catalyzes the hydrolysis of glutamine to glutamate and ammonia as part of the synthesis of IGP and AICAR. The resulting ammonia molecule is channeled to the active site of HisF. This Synechococcus sp. (strain ATCC 27144 / PCC 6301 / SAUG 1402/1) (Anacystis nidulans) protein is Imidazole glycerol phosphate synthase subunit HisH.